The sequence spans 587 residues: MQSTDNDLSQSPPKLSADEQLKAASDQLRGTILRSLADPLTGAVSDSDAKLLKFHGIYQQDDREQRDERRRQKLEPAYQFMIRVRLPGGVCSAAQWLKLDELARAYGGDSLRLTTRQTFQFHWVLKHNLQATLQGLHEVLLDTIAACGDDARGVMCTADPRLSALHAAVYDIARQASDHAIPRMRAYHEIWWGEQRVASSDAGPEEPFYGQTYLPRKFKIGFVIPPVNDIDVYAQDLGFIAIAGDDGALQGFNVAIGGGMGRTDQAPATYPRLADVIGFVPPEAVIATCDAVMGVQRDYGNRKDRARARFKYTIDEHGLDAVKAEIERRLGFALQPARPFRFDSNGDALGWQTGEDGRHHVTLFIQNGRLVNLPGLPLLEGLREIARVHTGSFRITPNQNVVIADIGDAERPRIEALLRQYQLEAGPSTSALRLNSMACVALPTCGLAMAESERYLPELVGKIEALLRTHGLEREPITIRMSGCPNGCSRPYIAEIGLTGRAPGKYNLYLGGGFHGQRLNRMVLENAAEAAILALLDTTLAHYARDRHEGEHFGDFAVRAGYVEAVTAGRDFNQRRAPGAGATAPHA.

The segment covering 1–13 (MQSTDNDLSQSPP) has biased composition (polar residues). Residues 1 to 20 (MQSTDNDLSQSPPKLSADEQ) form a disordered region. [4Fe-4S] cluster-binding residues include Cys439, Cys445, Cys484, and Cys488. Cys488 is a siroheme binding site.

Belongs to the nitrite and sulfite reductase 4Fe-4S domain family. As to quaternary structure, alpha(8)-beta(8). The alpha component is a flavoprotein, the beta component is a hemoprotein. The cofactor is siroheme. It depends on [4Fe-4S] cluster as a cofactor.

It catalyses the reaction hydrogen sulfide + 3 NADP(+) + 3 H2O = sulfite + 3 NADPH + 4 H(+). Its pathway is sulfur metabolism; hydrogen sulfide biosynthesis; hydrogen sulfide from sulfite (NADPH route): step 1/1. Its function is as follows. Component of the sulfite reductase complex that catalyzes the 6-electron reduction of sulfite to sulfide. This is one of several activities required for the biosynthesis of L-cysteine from sulfate. This Bordetella petrii (strain ATCC BAA-461 / DSM 12804 / CCUG 43448) protein is Sulfite reductase [NADPH] hemoprotein beta-component.